The primary structure comprises 667 residues: DNA ligase (667 aa).

Residues 34–38, 83–84, and glutamate 117 each bind NAD(+); these read DYEFD and SL. Residue lysine 119 is the N6-AMP-lysine intermediate of the active site. The NAD(+) site is built by arginine 140, glutamate 176, lysine 289, and lysine 313. Positions 407, 410, 425, and 431 each coordinate Zn(2+). A BRCT domain is found at 591–667; that stretch reads QVNRNFEGMS…ISEDEFMGMM (77 aa).

This sequence belongs to the NAD-dependent DNA ligase family. LigA subfamily. The cofactor is Mg(2+). Mn(2+) serves as cofactor.

It catalyses the reaction NAD(+) + (deoxyribonucleotide)n-3'-hydroxyl + 5'-phospho-(deoxyribonucleotide)m = (deoxyribonucleotide)n+m + AMP + beta-nicotinamide D-nucleotide.. Functionally, DNA ligase that catalyzes the formation of phosphodiester linkages between 5'-phosphoryl and 3'-hydroxyl groups in double-stranded DNA using NAD as a coenzyme and as the energy source for the reaction. It is essential for DNA replication and repair of damaged DNA. The sequence is that of DNA ligase from Chlorobium chlorochromatii (strain CaD3).